The sequence spans 378 residues: MEQLSAANTRFALDLFRALNESNPAGNIFISPFSISSALAMILLGTRGNTEAQMSKALHFDTVKDIHSRFQSLNADINKCGASYILKLANRLFGEKTYHFLPEFLASTQKTYGAELASVDFLRASEEARKAINEWVKEQTEGKIPELLASGVVDSATKLVLVNAIYFKGSWQEKFMTEATKDAPFRLNKKDSKTVKMMYQKKKFPFGYIKELKCRVLELPYQGKDLSMVILLPDSIEDESTGLRKIEQHLTLEKLNEWTKPDNLELLEVNVHLPRFRLEESYDLNAPLARLGVQDLFGSRADLTGMSEARDLFISKVVHKAFVEVNEEGTEAAAATAGIAVFAMLMPEEDFIADHPFIFFIRHNPSSNILFLGRLSSP.

Met1 carries the post-translational modification N-acetylmethionine. Lys137 is modified (N6-acetyllysine). At Ser299 the chain carries Phosphoserine. A CARD-binding motif (CBM) region spans residues 350-378 (DFIADHPFIFFIRHNPSSNILFLGRLSSP).

Belongs to the serpin family. Ov-serpin subfamily. Monomer. Interacts (via C-terminus) with CASP1; CASP4 (via CARD domain) and CASP5; these interactions regulate the activity of inflammatory caspases. Interacts with PRTN3. Interacts with GZMH.

The protein resides in the secreted. Its subcellular location is the cytoplasm. It localises to the cytolytic granule. It is found in the early endosome. Neutrophil serine protease inhibitor that plays an essential role in the regulation of the innate immune response, inflammation and cellular homeostasis. Acts primarily to protect the cell from proteases released in the cytoplasm during stress or infection. These proteases are important in killing microbes but when released from granules, these potent enzymes also destroy host proteins and contribute to mortality. Regulates the activity of the neutrophil proteases elastase, cathepsin G, proteinase-3, chymase, chymotrypsin, and kallikrein-3. Also acts as a potent intracellular inhibitor of GZMH by directly blocking its proteolytic activity. During inflammation, limits the activity of inflammatory caspases CASP1, CASP4 and CASP5 by suppressing their caspase-recruitment domain (CARD) oligomerization and enzymatic activation. When secreted, promotes the proliferation of beta-cells via its protease inhibitory function. Its function is as follows. May be cleaved leading to a loss of its anti-protease activity and to the appearance of an endonuclease activity. However no catalytic site was identified. The chain is Leukocyte elastase inhibitor (SERPINB1) from Sus scrofa (Pig).